The following is a 124-amino-acid chain: Putative iron-sulfur cluster insertion protein ErpA (124 aa).

Positions 52, 116, and 118 each coordinate iron-sulfur cluster.

It belongs to the HesB/IscA family. As to quaternary structure, homodimer. The cofactor is iron-sulfur cluster.

Required for insertion of 4Fe-4S clusters. This chain is Putative iron-sulfur cluster insertion protein ErpA, found in Ralstonia nicotianae (strain ATCC BAA-1114 / GMI1000) (Ralstonia solanacearum).